The sequence spans 63 residues: MKAQDLREKSVEELNSELLNLLREQFNLRMQAATGQLQQTHTLKAVRRDIARVKTVLTEKAGA.

It belongs to the universal ribosomal protein uL29 family.

The protein is Large ribosomal subunit protein uL29 of Vibrio vulnificus (strain CMCP6).